Consider the following 253-residue polypeptide: Pupal cuticle protein (253 aa).

An N-terminal signal peptide occupies residues methionine 1–alanine 18. Over residues leucine 54 to aspartate 66 the composition is skewed to polar residues. Residues leucine 54–tryptophan 74 form a disordered region. Repeat copies occupy residues alanine 97–alanine 100, alanine 115–alanine 118, and alanine 154–alanine 157. Residues alanine 155–glutamine 167 are compositionally biased toward low complexity. Disordered regions lie at residues alanine 155–asparagine 178 and alanine 187–histidine 206. Positions alanine 189–serine 201 are enriched in polar residues.

In terms of biological role, component of the cuticle of the pupae of silk moth. The chain is Pupal cuticle protein (PCP) from Bombyx mori (Silk moth).